The primary structure comprises 538 residues: Interleukin-21 receptor (538 aa).

The first 19 residues, 1–19, serve as a signal peptide directing secretion; sequence MPRGWAAPLLLLLLQGGWG. 3 disulfide bridges follow: C20/C109, C25/C35, and C65/C81. The Extracellular segment spans residues 20–232; the sequence is CPDLVCYTDY…FQTQSEELKE (213 aa). 2 Fibronectin type-III domains span residues 21–118 and 119–228; these read PDLV…AESI and KPAP…TQSE. N73, N97, N104, N125, and N135 each carry an N-linked (GlcNAc...) asparagine glycan. C-linked (Man) tryptophan glycosylation is present at W214. The WSXWS motif motif lies at 214 to 218; the sequence is WSEWS. A helical transmembrane segment spans residues 233–253; it reads GWNPHLLLLLLLVIVFIPAFW. Topologically, residues 254-538 are cytoplasmic; that stretch reads SLKTHPLWRL…PLSSPGPQAS (285 aa). Residues 266–274 carry the Box 1 motif motif; the sequence is KIWAVPSPE. Disordered stretches follow at residues 342 to 367 and 457 to 487; these read ESDGVPKPSFWPTAQNSGGSAYSEER and EDWAGGLPWGGRSPGGVSESEAGSPLAGLDM.

The protein belongs to the type I cytokine receptor family. Type 4 subfamily. As to quaternary structure, heterodimer with the common gamma subunit. Associates with JAK1. C-mannosylated at Trp-214 in the WSXWS motif, the sugar chain makes extensive hydrogen bonds with Asn-73 sugar, and bridges the two fibronectin domains transforming the V-shaped receptor into an A-frame. In terms of tissue distribution, selectively expressed in lymphoid tissues. Most highly expressed in thymus and spleen.

The protein localises to the membrane. Its function is as follows. This is a receptor for interleukin-21. In Homo sapiens (Human), this protein is Interleukin-21 receptor (IL21R).